Consider the following 463-residue polypeptide: Phosphoglucosamine mutase (463 aa).

The Phosphoserine intermediate role is filled by Ser101. The Mg(2+) site is built by Ser101, Asp256, Asp258, and Asp260. Residue Ser101 is modified to Phosphoserine.

Belongs to the phosphohexose mutase family. Mg(2+) is required as a cofactor. Activated by phosphorylation.

It catalyses the reaction alpha-D-glucosamine 1-phosphate = D-glucosamine 6-phosphate. Functionally, catalyzes the conversion of glucosamine-6-phosphate to glucosamine-1-phosphate. The chain is Phosphoglucosamine mutase from Desulforapulum autotrophicum (strain ATCC 43914 / DSM 3382 / VKM B-1955 / HRM2) (Desulfobacterium autotrophicum).